A 418-amino-acid chain; its full sequence is Pyrophosphate--fructose 6-phosphate 1-phosphotransferase (418 aa).

Residue glycine 13 participates in diphosphate binding. Asparagine 111 contacts Mg(2+). Substrate-binding positions include threonine 139–aspartate 141, methionine 187–arginine 189, glutamate 244, and tyrosine 295–arginine 298. Aspartate 141 functions as the Proton acceptor in the catalytic mechanism.

Belongs to the phosphofructokinase type A (PFKA) family. PPi-dependent PFK group II subfamily. Clade 'B2' sub-subfamily. In terms of assembly, homodimer. Mg(2+) is required as a cofactor.

Its subcellular location is the cytoplasm. The enzyme catalyses beta-D-fructose 6-phosphate + diphosphate = beta-D-fructose 1,6-bisphosphate + phosphate + H(+). It participates in carbohydrate degradation; glycolysis; D-glyceraldehyde 3-phosphate and glycerone phosphate from D-glucose: step 3/4. Its activity is regulated as follows. Non-allosteric. Functionally, catalyzes the phosphorylation of D-fructose 6-phosphate, the first committing step of glycolysis. Uses inorganic phosphate (PPi) as phosphoryl donor instead of ATP like common ATP-dependent phosphofructokinases (ATP-PFKs), which renders the reaction reversible, and can thus function both in glycolysis and gluconeogenesis. Consistently, PPi-PFK can replace the enzymes of both the forward (ATP-PFK) and reverse (fructose-bisphosphatase (FBPase)) reactions. In Xanthomonas campestris pv. campestris (strain B100), this protein is Pyrophosphate--fructose 6-phosphate 1-phosphotransferase.